We begin with the raw amino-acid sequence, 360 residues long: Protein RecA (360 aa).

Gly-66–Thr-73 provides a ligand contact to ATP. Positions Asp-330 to Lys-360 are disordered.

This sequence belongs to the RecA family.

The protein localises to the cytoplasm. Functionally, can catalyze the hydrolysis of ATP in the presence of single-stranded DNA, the ATP-dependent uptake of single-stranded DNA by duplex DNA, and the ATP-dependent hybridization of homologous single-stranded DNAs. It interacts with LexA causing its activation and leading to its autocatalytic cleavage. The chain is Protein RecA from Lactobacillus johnsonii (strain CNCM I-12250 / La1 / NCC 533).